A 531-amino-acid polypeptide reads, in one-letter code: MPQVAASSSNVGPSSAAASSASHVQEVAKSASDPPKHTSFSSIGISPMLIRSLASLQIKVPTPIQSLTIPSVLEGRDLVGGAQTGSGKTLCFALPILNKLIKDMVGGFAVVLTPTRELGVQLHEQFVAVGEGARMGLRCALVLGGMDMMKQASELANLRPHVIVATPGRLVDHLRSGGGEEWGLRRCKFLVLDEADRLLTDTFKPELEYLYSVLPSAKTLQTLLFTATLTEQVVEFANAKRPEGKPAPMVCKIEMDTKTPETLEQRYVFVPSHVREPYLYHILRHPPIKPSSERVRKLNAKHQADRERKEENQRKSGKRRRTHHASDSDLDQDDDAALFLPATIIFTARCKTAATLSGMLAELGIPNVSLHSHLRQSERSENLQTFRAQRVPVLIATDVGSRGLDIPDVELVINWDLPSAWQDYVHRVGRTARNGKRGFAISFITERDIDVIHSIEDKINTKLTQLEGLEDEDKILEKLNAVATAKRVATMALHDSQFGERQQRNQHKQLARLKAEKRASKKAKSAGHDQQ.

Low complexity predominate over residues 1–28 (MPQVAASSSNVGPSSAAASSASHVQEVA). The tract at residues 1–39 (MPQVAASSSNVGPSSAAASSASHVQEVAKSASDPPKHTS) is disordered. Residues 38 to 66 (TSFSSIGISPMLIRSLASLQIKVPTPIQS) carry the Q motif motif. Positions 69 to 247 (IPSVLEGRDL…NAKRPEGKPA (179 aa)) constitute a Helicase ATP-binding domain. 82-89 (AQTGSGKT) contacts ATP. Residues 193–196 (DEAD) carry the DEAD box motif. The span at 291-314 (SSERVRKLNAKHQADRERKEENQR) shows a compositional bias: basic and acidic residues. Disordered regions lie at residues 291 to 331 (SSER…SDLD) and 495 to 531 (DSQF…HDQQ). In terms of domain architecture, Helicase C-terminal spans 332–531 (QDDDAALFLP…KAKSAGHDQQ (200 aa)).

The protein belongs to the DEAD box helicase family. DDX49/DBP8 subfamily.

Its subcellular location is the nucleus. The protein resides in the nucleolus. It catalyses the reaction ATP + H2O = ADP + phosphate + H(+). Its function is as follows. ATP-binding RNA helicase involved in 40S ribosomal subunit biogenesis and is required for the normal formation of 18S rRNAs through pre-rRNA processing at A0, A1 and A2 sites. Required for vegetative growth. The sequence is that of ATP-dependent RNA helicase DBP8 (DBP8) from Mycosarcoma maydis (Corn smut fungus).